Consider the following 176-residue polypeptide: Small ribosomal subunit protein uS5 (176 aa).

An S5 DRBM domain is found at 11-74 (LSEVLVDVNR…QAAKKRMMKV (64 aa)).

It belongs to the universal ribosomal protein uS5 family. In terms of assembly, part of the 30S ribosomal subunit. Contacts proteins S4 and S8.

In terms of biological role, with S4 and S12 plays an important role in translational accuracy. Located at the back of the 30S subunit body where it stabilizes the conformation of the head with respect to the body. This chain is Small ribosomal subunit protein uS5, found in Rickettsia massiliae (strain Mtu5).